We begin with the raw amino-acid sequence, 246 residues long: Probable transcriptional regulatory protein AHA_1522 (246 aa).

This sequence belongs to the TACO1 family.

Its subcellular location is the cytoplasm. The protein is Probable transcriptional regulatory protein AHA_1522 of Aeromonas hydrophila subsp. hydrophila (strain ATCC 7966 / DSM 30187 / BCRC 13018 / CCUG 14551 / JCM 1027 / KCTC 2358 / NCIMB 9240 / NCTC 8049).